The sequence spans 890 residues: MEGGGKPNSSSNSRDDGNSVFPAKASATGAGPAAAEKRLGTPPGGGGAGAKEHGNSVCFKVDGGGGGGGGGGGGEEPAGGFEDAEGPRRQYGFMQRQFTSMLQPGVNKFSLRMFGSQKAVEKEQERVKTAGFWIIHPYSDFRFYWDLIMLIMMVGNLVIIPVGITFFTEQTTTPWIIFNVASDTVFLLDLIMNFRTGTVNEDSSEIILDPKVIKMNYLKSWFVVDFISSIPVDYIFLIVEKGMDSEVYKTARALRIVRFTKILSLLRLLRLSRLIRYIHQWEEIFHMTYDLASAVVRIFNLIGMMLLLCHWDGCLQFLVPLLQDFPPDCWVSLNEMVNDSWGKQYSYALFKAMSHMLCIGYGAQAPVSMSDLWITMLSMIVGATCYAMFVGHATALIQSLDSSRRQYQEKYKQVEQYMSFHKLPADMRQKIHDYYEHRYQGKIFDEENILNELNDPLREEIVNFNCRKLVATMPLFANADPNFVTAMLSKLRFEVFQPGDYIIREGAVGKKMYFIQHGVAGVITKSSKEMKLTDGSYFGEICLLTKGRRTASVRADTYCRLYSLSVDNFNEVLEEYPMMRRAFETVAIDRLDRIGKKNSILLQKFQKDLNTGVFNNQENEILKQIVKHDREMVQAIAPINYPQMTTLNSTSSTTTPTSRMRTQSPPVYTATSLSHSNLHSPSPSTQTPQPSAILSPCSYTTAVCSPPVQSPLAARTFHYASPTASQLSLMQQQPQQQVQQSQPPQTQPQQPSPQPQTPGSSTPKNEVHKSTQALHNTNLTREVRPLSASQPSLPHEVSTLISRPHPTVGESLASIPQPVTAVPGTGLQAGGRSTVPQRVTLFRQMSSGAIPPNRGVPPAPPPPAAALPRESSSVLNTDPDAEKPRFASNL.

Positions M1 to F93 are disordered. The Cytoplasmic segment spans residues M1–R142. Positions N8 to A34 are enriched in low complexity. The span at D62 to P77 shows a compositional bias: gly residues. Residues F143–I164 form a helical membrane-spanning segment. Residues T165–T173 are Extracellular-facing. A helical transmembrane segment spans residues P174–F194. The Cytoplasmic segment spans residues R195–M215. Residues N216–F236 traverse the membrane as a helical segment. The Extracellular portion of the chain corresponds to L237–T260. Residues K261–W281 form a helical; Voltage-sensor membrane-spanning segment. Over E282–V295 the chain is Cytoplasmic. A helical transmembrane segment spans residues V296–L318. The Extracellular segment spans residues V319–Q344. Residue N338 is glycosylated (N-linked (GlcNAc...) asparagine). Residues Y345 to P366 constitute an intramembrane region (pore-forming). The Selectivity filter signature appears at C358–G362. The Extracellular segment spans residues V367–D371. A helical transmembrane segment spans residues L372–H392. Residues A393–L890 lie on the Cytoplasmic side of the membrane. Positions 539, 540, 542, 549, 550, 590, and 593 each coordinate 3',5'-cyclic AMP. Low complexity-rich tracts occupy residues M644 to S691 and Q731 to Q749. 3 disordered regions span residues M644 to A692, S725 to E796, and M845 to L890. Over residues S770–T780 the composition is skewed to polar residues. Pro residues predominate over residues R854 to A865. Over residues D880–L890 the composition is skewed to basic and acidic residues.

The protein belongs to the potassium channel HCN family. Homotetramer. Heterotetramer with HCN2. The potassium channel is composed of a homo- or heterotetrameric complex of pore-forming subunits. Interacts with KCNE2. Interacts with the SH3 domain of CSK. In terms of tissue distribution, detected in brain, in particular in amygdala and hippocampus, while expression in caudate nucleus, corpus callosum, substantia nigra, subthalamic nucleus and thalamus is very low or not detectable. Detected at very low levels in muscle and pancreas.

It localises to the cell membrane. The enzyme catalyses Na(+)(in) = Na(+)(out). It catalyses the reaction K(+)(in) = K(+)(out). Activated by cAMP, and at 10-100 times higher concentrations, also by cGMP. cAMP binding promotes tetramerization and formation of an active channel. Compared to other family members, cAMP has less stimulatory effect on HCN1 because part of the molecules already contain bound cAMP and form homotetramers when cAMP levels are low, this inherent tetramerization in HCN1 results in a weaker response to increased cAMP. Inhibited by Cs(1+), zatebradine, capsazepine and ZD7288. Its function is as follows. Hyperpolarization-activated ion channel that are permeable to sodium and potassium ions. Displays lower selectivity for K(+) over Na(+) ions. Contributes to the native pacemaker currents in heart (If) and in the generation of the I(h) current which controls neuron excitability. Participates in cerebellar mechanisms of motor learning. May mediate responses to sour stimuli. The chain is Potassium/sodium hyperpolarization-activated cyclic nucleotide-gated channel 1 (HCN1) from Homo sapiens (Human).